The following is an 86-amino-acid chain: Exodeoxyribonuclease 7 small subunit (86 aa).

The protein belongs to the XseB family. As to quaternary structure, heterooligomer composed of large and small subunits.

The protein localises to the cytoplasm. The catalysed reaction is Exonucleolytic cleavage in either 5'- to 3'- or 3'- to 5'-direction to yield nucleoside 5'-phosphates.. Bidirectionally degrades single-stranded DNA into large acid-insoluble oligonucleotides, which are then degraded further into small acid-soluble oligonucleotides. This chain is Exodeoxyribonuclease 7 small subunit, found in Xanthomonas axonopodis pv. citri (strain 306).